We begin with the raw amino-acid sequence, 247 residues long: Cytochrome c oxidase subunit 2 (247 aa).

The Mitochondrial intermembrane segment spans residues 12-38; it reads DVPTPWGLYFQDSSTPNQEGIIELHDN. The helical transmembrane segment at 39 to 59 threads the bilayer; that stretch reads IMFYLVLILCTVSWLLFSIVK. The Mitochondrial matrix segment spans residues 60 to 78; that stretch reads DSSKNPLPHKYLVHGQTIE. The chain crosses the membrane as a helical span at residues 79–101; the sequence is IIWTILPAVVLLIIAFPSFILLY. Over 102-247 the chain is Mitochondrial intermembrane; sequence LCDEVISPAM…KEFLTWLNEQ (146 aa). 6 residues coordinate Cu cation: histidine 182, cysteine 217, glutamate 219, cysteine 221, histidine 225, and methionine 228. Glutamate 219 contributes to the Mg(2+) binding site.

It belongs to the cytochrome c oxidase subunit 2 family. In terms of assembly, component of the cytochrome c oxidase (complex IV, CIV), a multisubunit enzyme composed of a catalytic core of 3 subunits and several supernumerary subunits. The complex exists as a monomer or a dimer and forms supercomplexes (SCs) in the inner mitochondrial membrane with ubiquinol-cytochrome c oxidoreductase (cytochrome b-c1 complex, complex III, CIII). It depends on Cu cation as a cofactor. In terms of processing, the signal sequence of COX2 is processed by IMP1.

It localises to the mitochondrion inner membrane. It catalyses the reaction 4 Fe(II)-[cytochrome c] + O2 + 8 H(+)(in) = 4 Fe(III)-[cytochrome c] + 2 H2O + 4 H(+)(out). Functionally, component of the cytochrome c oxidase, the last enzyme in the mitochondrial electron transport chain which drives oxidative phosphorylation. The respiratory chain contains 3 multisubunit complexes succinate dehydrogenase (complex II, CII), ubiquinol-cytochrome c oxidoreductase (cytochrome b-c1 complex, complex III, CIII) and cytochrome c oxidase (complex IV, CIV), that cooperate to transfer electrons derived from NADH and succinate to molecular oxygen, creating an electrochemical gradient over the inner membrane that drives transmembrane transport and the ATP synthase. Cytochrome c oxidase is the component of the respiratory chain that catalyzes the reduction of oxygen to water. Electrons originating from reduced cytochrome c in the intermembrane space (IMS) are transferred via the dinuclear copper A center (CU(A)) of subunit 2 and heme A of subunit 1 to the active site in subunit 1, a binuclear center (BNC) formed by heme A3 and copper B (CU(B)). The BNC reduces molecular oxygen to 2 water molecules using 4 electrons from cytochrome c in the IMS and 4 protons from the mitochondrial matrix. The sequence is that of Cytochrome c oxidase subunit 2 (COX2) from Cyberlindnera mrakii (Yeast).